We begin with the raw amino-acid sequence, 288 residues long: Acetyl-coenzyme A carboxylase carboxyl transferase subunit beta (288 aa).

The CoA carboxyltransferase N-terminal domain maps to 30–288 (IMTKCPKCKK…KLHQEVKKDA (259 aa)). Residues Cys-34, Cys-37, Cys-53, and Cys-56 each coordinate Zn(2+). Residues 34–56 (CPKCKKIMYTKELNENLNVCFNC) form a C4-type zinc finger.

It belongs to the AccD/PCCB family. In terms of assembly, acetyl-CoA carboxylase is a heterohexamer composed of biotin carboxyl carrier protein (AccB), biotin carboxylase (AccC) and two subunits each of ACCase subunit alpha (AccA) and ACCase subunit beta (AccD). Zn(2+) serves as cofactor.

It is found in the cytoplasm. It catalyses the reaction N(6)-carboxybiotinyl-L-lysyl-[protein] + acetyl-CoA = N(6)-biotinyl-L-lysyl-[protein] + malonyl-CoA. Its pathway is lipid metabolism; malonyl-CoA biosynthesis; malonyl-CoA from acetyl-CoA: step 1/1. Functionally, component of the acetyl coenzyme A carboxylase (ACC) complex. Biotin carboxylase (BC) catalyzes the carboxylation of biotin on its carrier protein (BCCP) and then the CO(2) group is transferred by the transcarboxylase to acetyl-CoA to form malonyl-CoA. This Staphylococcus haemolyticus (strain JCSC1435) protein is Acetyl-coenzyme A carboxylase carboxyl transferase subunit beta.